Consider the following 163-residue polypeptide: 3-hydroxyacyl-[acyl-carrier-protein] dehydratase FabZ (163 aa).

Histidine 61 is an active-site residue.

The protein belongs to the thioester dehydratase family. FabZ subfamily.

It localises to the cytoplasm. It catalyses the reaction a (3R)-hydroxyacyl-[ACP] = a (2E)-enoyl-[ACP] + H2O. Functionally, involved in unsaturated fatty acids biosynthesis. Catalyzes the dehydration of short chain beta-hydroxyacyl-ACPs and long chain saturated and unsaturated beta-hydroxyacyl-ACPs. The sequence is that of 3-hydroxyacyl-[acyl-carrier-protein] dehydratase FabZ from Dinoroseobacter shibae (strain DSM 16493 / NCIMB 14021 / DFL 12).